A 294-amino-acid chain; its full sequence is Glyceraldehyde-3-phosphate dehydrogenase (294 aa).

Positions 19, 63, and 105 each coordinate NAD(+). Residues Ser-134–Thr-136 and Thr-165 contribute to the D-glyceraldehyde 3-phosphate site. Cys-135 serves as the catalytic Nucleophile. Positions Lys-169–Asn-188 are disordered. D-glyceraldehyde 3-phosphate-binding positions include Thr-194–Gly-195 and Arg-217.

It belongs to the glyceraldehyde-3-phosphate dehydrogenase family. In terms of assembly, homotetramer.

The protein localises to the cytoplasm. It carries out the reaction D-glyceraldehyde 3-phosphate + phosphate + NAD(+) = (2R)-3-phospho-glyceroyl phosphate + NADH + H(+). It participates in carbohydrate degradation; glycolysis; pyruvate from D-glyceraldehyde 3-phosphate: step 1/5. In terms of biological role, catalyzes the oxidative phosphorylation of glyceraldehyde 3-phosphate (G3P) to 1,3-bisphosphoglycerate (BPG) using the cofactor NAD. The first reaction step involves the formation of a hemiacetal intermediate between G3P and a cysteine residue, and this hemiacetal intermediate is then oxidized to a thioester, with concomitant reduction of NAD to NADH. The reduced NADH is then exchanged with the second NAD, and the thioester is attacked by a nucleophilic inorganic phosphate to produce BPG. The sequence is that of Glyceraldehyde-3-phosphate dehydrogenase (gap) from Serratia marcescens.